Here is a 230-residue protein sequence, read N- to C-terminus: uncharacterized protein (230 aa).

Residue 10 to 34 (VVTGASSGIGEAIAKKLSQQGASIV) coordinates NADP(+). A substrate-binding site is contributed by S139. Y152 (proton acceptor) is an active-site residue.

Belongs to the short-chain dehydrogenases/reductases (SDR) family.

This is an uncharacterized protein from Staphylococcus epidermidis (strain ATCC 12228 / FDA PCI 1200).